We begin with the raw amino-acid sequence, 554 residues long: Solute carrier family 22 member 1 (554 aa).

The Cytoplasmic portion of the chain corresponds to 1–24 (MPSVDDVLEQVGEFGWFQKQAFLN). Residues 25 to 45 (LCLTSVAFAPIYVGIVFLGFT) traverse the membrane as a helical segment. The Extracellular segment spans residues 46-234 (PDHRCRSPGV…EFVGLGYRKT (189 aa)). Asn-71 is a glycosylation site (N-linked (GlcNAc...) asparagine). Residues 235–255 (VAILYQTAFSVGLVLLSGLAY) traverse the membrane as a helical segment. Topologically, residues 256–261 (AVPHWR) are cytoplasmic. Residues 262-282 (SLQLAVSLPIFLLLLCYWFVP) traverse the membrane as a helical segment. The short motif at 282 to 286 (PESPR) is the Proline-rich sequence element. Residues 283 to 347 (ESPRWLLSQK…FRTQNLRKYT (65 aa)) are Extracellular-facing. A Phosphoserine modification is found at Ser-333. A helical transmembrane segment spans residues 348–368 (FILMYLWFTSSVLYQGLIMHV). Topologically, residues 369 to 376 (GATGGSLY) are cytoplasmic. The helical transmembrane segment at 377–397 (LDFLYSALVEFPAAFVILLII) threads the bilayer. Topologically, residues 398–402 (DRFGR) are extracellular. A helical transmembrane segment spans residues 403-423 (LYLLAGSNLLAGAACFFMIFI). The Cytoplasmic portion of the chain corresponds to 424 to 431 (SHDLHWLS). A helical membrane pass occupies residues 432 to 452 (IVAACIGRMGITIVFQMVCLV). Residues 453-464 (SAELYPTFIRNL) are Extracellular-facing. A helical transmembrane segment spans residues 465–485 (GVMVCSSLCDLGGVVAPFLVF). At 486-492 (RLTEVWR) the chain is on the cytoplasmic side. Residues 493–513 (GLPLVLFAALGLVAGGMSLLL) traverse the membrane as a helical segment. The Extracellular segment spans residues 514-554 (PETKGVALPETIEEVERLGRKAKPRDNMIYLQVKMPEPAGL).

This sequence belongs to the major facilitator (TC 2.A.1) superfamily. Organic cation transporter (TC 2.A.1.19) family. Phosphorylated.

Its subcellular location is the basolateral cell membrane. The protein localises to the apical cell membrane. It is found in the lateral cell membrane. It localises to the basal cell membrane. The protein resides in the cell membrane. It carries out the reaction 1-methylnicotinamide(out) = 1-methylnicotinamide(in). It catalyses the reaction dopamine(out) = dopamine(in). The enzyme catalyses serotonin(out) = serotonin(in). The catalysed reaction is (R)-adrenaline(out) = (R)-adrenaline(in). It carries out the reaction (R)-noradrenaline(out) = (R)-noradrenaline(in). It catalyses the reaction histamine(out) = histamine(in). The enzyme catalyses guanidine(out) = guanidine(in). The catalysed reaction is choline(out) = choline(in). It carries out the reaction acetylcholine(in) = acetylcholine(out). It catalyses the reaction thiamine(in) = thiamine(out). The enzyme catalyses spermidine(in) = spermidine(out). The catalysed reaction is agmatine(out) = agmatine(in). It carries out the reaction putrescine(out) = putrescine(in). It catalyses the reaction (R)-carnitine(in) = (R)-carnitine(out). The enzyme catalyses O-isobutanoyl-(R)-carnitine(in) = O-isobutanoyl-(R)-carnitine(out). The catalysed reaction is O-acetyl-(R)-carnitine(in) = O-acetyl-(R)-carnitine(out). It carries out the reaction O-3-hydroxybutanoyl-(R)-carnitine(in) = O-3-hydroxybutanoyl-(R)-carnitine(out). It catalyses the reaction O-propanoyl-(R)-carnitine(in) = O-propanoyl-(R)-carnitine(out). The enzyme catalyses O-butanoyl-(R)-carnitine(in) = O-butanoyl-(R)-carnitine(out). The catalysed reaction is O-2-methylbutanoyl-(R)-carnitine(in) = O-2-methylbutanoyl-(R)-carnitine(out). It carries out the reaction O-3-methylbutanoyl-(R)-carnitine(in) = O-3-methylbutanoyl-(R)-carnitine(out). It catalyses the reaction O-hexanoyl-(R)-carnitine(in) = O-hexanoyl-(R)-carnitine(out). The enzyme catalyses L-histidyl-L-proline diketopiperazine(in) = L-histidyl-L-proline diketopiperazine(out). The catalysed reaction is (R)-salsolinol(in) = (R)-salsolinol(out). It carries out the reaction prostaglandin F2alpha(out) = prostaglandin F2alpha(in). It catalyses the reaction prostaglandin E2(out) = prostaglandin E2(in). Its activity is regulated as follows. Phosphorylation of the transporter leads to changes in its substrate affinity, resulting in a regulation of the transport activity. In contrast with rat ortholog, ASP uptake is inhibited by protein kinase A (PKA) and C (PKC) activation. ASP uptake is also endogenously activated by calmodulin, the calmodulin-dependent kinase II and LCK tyrosine kinase. Inhibited by cGMP, most likely through a cGMP-binding protein that interacts with OCT1. In terms of biological role, electrogenic voltage-dependent transporter that mediates the transport of a variety of organic cations such as endogenous bioactive amines, cationic drugs and xenobiotics. Functions as a pH- and Na(+)-independent, bidirectional transporter. Cation cellular uptake or release is driven by the electrochemical potential (i.e. membrane potential and concentration gradient) and substrate selectivity. Hydrophobicity is a major requirement for recognition in polyvalent substrates and inhibitors. Primarily expressed in the basolateral membrane of hepatocytes and proximal tubules and involved in the uptake and disposition of cationic compounds from the blood by hepatic and renal clearance. Most likely functions as an uptake carrier in enterocytes contributing to the intestinal elimination of organic cations from the systemic circulation. Transports endogenous monoamines such as N-1-methylnicotinamide (NMN), guanidine, neurotransmitters dopamine, serotonin, noradrenaline, adrenaline and histamine, and quaternary ammonium compound such as choline. Also transports natural polyamines such as spermidine, agmatine and putrescine at low affinity, but relatively high turnover. Involved in the hepatic and intestinal uptake of the vitamin B1/thiamine, hence regulating hepatic lipid and energy metabolism. Contributes to the influx and efflux of fatty acid carriers carnitines and acylcarnitines across the basolateral membrane of hepatocytes, from the liver to the systemic circulation and inversely and may be involved in regulating the systemic availability of hepatic acylcarnitines. Also capable of transporting non-amine endogenous compounds such as prostaglandin E2 (PGE2) and prostaglandin F2-alpha (PGF2-alpha). May contribute to the transport of cationic compounds in testes across the blood-testis-barrier. Also mediates the uptake of xenobiotics tributylmethylammonium (TBuMA), quinidine, N-methyl-quinine (NMQ), N-methyl-quinidine (NMQD) N-(4,4-azo-n-pentyl)-quinuclidine (APQ), azidoprocainamide methoiodide (AMP), N-(4,4-azo-n-pentyl)-21-deoxyajmalinium (APDA) and 4-(4-(dimethylamino)styryl)-N-methylpyridinium (ASP). The protein is Solute carrier family 22 member 1 (SLC22A1) of Sus scrofa (Pig).